The primary structure comprises 1030 residues: Calcium-transporting ATPase 4, plasma membrane-type (1030 aa).

Residues 1–157 are Cytoplasmic-facing; sequence MSNLLRDFEV…NRYTEKPARS (157 aa). The interaction with calmodulin stretch occupies residues 19 to 30; that stretch reads ARQRWRSSVSIV. Serine 28 carries the phosphoserine modification. A helical membrane pass occupies residues 158–178; the sequence is FLMFVWEALHDITLIILMVCA. Topologically, residues 179-196 are lumenal; the sequence is VVSIGVGVATEGFPRGMY. A helical transmembrane segment spans residues 197 to 217; sequence DGTGILLSILLVVMVTAISDY. Topologically, residues 218 to 345 are cytoplasmic; sequence KQSLQFRDLD…EDETPLQVKL (128 aa). The helical transmembrane segment at 346 to 365 threads the bilayer; sequence NGVATIIGKIGLSFAVLTFV. The Lumenal segment spans residues 366–395; that stretch reads VLCIRFVLDKATSGSFTNWSSEDALTLLDY. The helical transmembrane segment at 396–413 threads the bilayer; the sequence is FAISVTIIVVAVPEGLPL. Topologically, residues 414–804 are cytoplasmic; it reads AVTLSLAFAM…RWGRAVYINI (391 aa). Aspartate 451 (4-aspartylphosphate intermediate) is an active-site residue. Residues aspartate 749 and aspartate 753 each contribute to the Mg(2+) site. The helical transmembrane segment at 805–823 threads the bilayer; sequence QKFVQFQLTVNVVALIINF. Residues 824–834 lie on the Lumenal side of the membrane; sequence VSACITGSAPL. A helical transmembrane segment spans residues 835–855; sequence TAVQLLWVNMIMDTLGALALA. The Cytoplasmic portion of the chain corresponds to 856–875; that stretch reads TEPPNEGLMKRAPIARTASF. A helical transmembrane segment spans residues 876 to 898; that stretch reads ITKTMWRNIAGQSVYQLIVLGIL. Residues 899–910 are Lumenal-facing; it reads NFAGKSLLKLDG. The helical transmembrane segment at 911-932 threads the bilayer; the sequence is PDSTAVLNTVIFNSFVFCQVFN. Residues 933 to 950 are Cytoplasmic-facing; it reads EINSREIEKINVFKGMFN. Residues 951 to 972 form a helical membrane-spanning segment; that stretch reads SWVFTWVMTVTVVFQVIIVEFL. The Lumenal segment spans residues 973–982; that stretch reads GAFASTVPLS. Residues 983-1004 form a helical membrane-spanning segment; the sequence is WQHWLLSILIGSLNMIVAVILK. Over 1005–1030 the chain is Cytoplasmic; sequence CVPVESRHHHDGYDLLPSGPSSSNSA.

The protein belongs to the cation transport ATPase (P-type) (TC 3.A.3) family. Type IIB subfamily.

The protein localises to the vacuole membrane. The enzyme catalyses Ca(2+)(in) + ATP + H2O = Ca(2+)(out) + ADP + phosphate + H(+). Its activity is regulated as follows. Activated by calmodulin. In terms of biological role, this magnesium-dependent enzyme catalyzes the hydrolysis of ATP coupled with the translocation of calcium from the cytosol into small vacuoles. The sequence is that of Calcium-transporting ATPase 4, plasma membrane-type (ACA4) from Arabidopsis thaliana (Mouse-ear cress).